The sequence spans 105 residues: Cell division topological specificity factor (105 aa).

It belongs to the MinE family.

Functionally, prevents the cell division inhibition by proteins MinC and MinD at internal division sites while permitting inhibition at polar sites. This ensures cell division at the proper site by restricting the formation of a division septum at the midpoint of the long axis of the cell. The protein is Cell division topological specificity factor of Prochlorococcus marinus (strain MIT 9515).